A 346-amino-acid chain; its full sequence is Phenylalanine--tRNA ligase alpha subunit (346 aa).

E259 contributes to the Mg(2+) binding site.

The protein belongs to the class-II aminoacyl-tRNA synthetase family. Phe-tRNA synthetase alpha subunit type 1 subfamily. In terms of assembly, tetramer of two alpha and two beta subunits. Requires Mg(2+) as cofactor.

The protein localises to the cytoplasm. The catalysed reaction is tRNA(Phe) + L-phenylalanine + ATP = L-phenylalanyl-tRNA(Phe) + AMP + diphosphate + H(+). The protein is Phenylalanine--tRNA ligase alpha subunit of Lactococcus lactis subsp. lactis (strain IL1403) (Streptococcus lactis).